The sequence spans 802 residues: Lon protease (802 aa).

The region spanning 21–215 (LPLLPVRDII…KIIQILNAEI (195 aa)) is the Lon N-terminal domain. Residue 367–374 (GPPGVGKT) participates in ATP binding. A Lon proteolytic domain is found at 603–784 (ENDVGVATGL…DEVISLTIER (182 aa)). Residues Ser-690 and Lys-733 contribute to the active site.

It belongs to the peptidase S16 family. In terms of assembly, homohexamer. Organized in a ring with a central cavity.

The protein localises to the cytoplasm. The catalysed reaction is Hydrolysis of proteins in presence of ATP.. ATP-dependent serine protease that mediates the selective degradation of mutant and abnormal proteins as well as certain short-lived regulatory proteins. Required for cellular homeostasis and for survival from DNA damage and developmental changes induced by stress. Degrades polypeptides processively to yield small peptide fragments that are 5 to 10 amino acids long. Binds to DNA in a double-stranded, site-specific manner. The sequence is that of Lon protease from Endomicrobium trichonymphae.